A 648-amino-acid polypeptide reads, in one-letter code: Transketolase (648 aa).

His22 is a binding site for substrate. Thiamine diphosphate is bound by residues His62 and 109 to 111; that span reads GPL. Asp150 contacts Mg(2+). Residues Gly151 and Asn180 each contribute to the thiamine diphosphate site. Asn180 and Val182 together coordinate Mg(2+). Residues His252, Arg345, and Ser372 each coordinate substrate. Residue His252 coordinates thiamine diphosphate. Glu397 functions as the Proton donor in the catalytic mechanism. A thiamine diphosphate-binding site is contributed by Phe423. Residues His447, Asp455, and Arg506 each coordinate substrate.

It belongs to the transketolase family. Homodimer. Mg(2+) serves as cofactor. It depends on Ca(2+) as a cofactor. The cofactor is Mn(2+). Co(2+) is required as a cofactor. Requires thiamine diphosphate as cofactor.

It carries out the reaction D-sedoheptulose 7-phosphate + D-glyceraldehyde 3-phosphate = aldehydo-D-ribose 5-phosphate + D-xylulose 5-phosphate. In terms of biological role, catalyzes the transfer of a two-carbon ketol group from a ketose donor to an aldose acceptor, via a covalent intermediate with the cofactor thiamine pyrophosphate. This Mycoplasma genitalium (strain ATCC 33530 / DSM 19775 / NCTC 10195 / G37) (Mycoplasmoides genitalium) protein is Transketolase (tkt).